The following is a 151-amino-acid chain: Ribonuclease H (151 aa).

Positions 1-143 (MYKKIEIFTD…CDQLARLAAK (143 aa)) constitute an RNase H type-1 domain. 4 residues coordinate Mg(2+): D10, E48, D70, and D135.

The protein belongs to the RNase H family. As to quaternary structure, monomer. It depends on Mg(2+) as a cofactor.

The protein localises to the cytoplasm. It catalyses the reaction Endonucleolytic cleavage to 5'-phosphomonoester.. Endonuclease that specifically degrades the RNA of RNA-DNA hybrids. The sequence is that of Ribonuclease H from Blochmanniella pennsylvanica (strain BPEN).